The sequence spans 151 residues: Putative pre-16S rRNA nuclease (151 aa).

The protein belongs to the YqgF nuclease family.

It is found in the cytoplasm. Functionally, could be a nuclease involved in processing of the 5'-end of pre-16S rRNA. This chain is Putative pre-16S rRNA nuclease, found in Nostoc sp. (strain PCC 7120 / SAG 25.82 / UTEX 2576).